The following is a 282-amino-acid chain: Biotin synthase (282 aa).

The Radical SAM core domain maps to 1 to 228 (MQEIFLCSIS…NARLMVAGGR (228 aa)). Residues cysteine 17, cysteine 21, and cysteine 24 each coordinate [4Fe-4S] cluster. [2Fe-2S] cluster contacts are provided by cysteine 61, cysteine 96, cysteine 154, and arginine 221.

This sequence belongs to the radical SAM superfamily. Biotin synthase family. As to quaternary structure, homodimer. [4Fe-4S] cluster serves as cofactor. The cofactor is [2Fe-2S] cluster.

It carries out the reaction (4R,5S)-dethiobiotin + (sulfur carrier)-SH + 2 reduced [2Fe-2S]-[ferredoxin] + 2 S-adenosyl-L-methionine = (sulfur carrier)-H + biotin + 2 5'-deoxyadenosine + 2 L-methionine + 2 oxidized [2Fe-2S]-[ferredoxin]. It participates in cofactor biosynthesis; biotin biosynthesis; biotin from 7,8-diaminononanoate: step 2/2. In terms of biological role, catalyzes the conversion of dethiobiotin (DTB) to biotin by the insertion of a sulfur atom into dethiobiotin via a radical-based mechanism. The chain is Biotin synthase from Helicobacter pylori (strain P12).